The primary structure comprises 474 residues: Glutamate--tRNA ligase (474 aa).

Residues 9-19 (PSPTGLLHMGG) carry the 'HIGH' region motif. The 'KMSKS' region motif lies at 238-242 (KLSKR). Lys-241 contacts ATP.

Belongs to the class-I aminoacyl-tRNA synthetase family. Glutamate--tRNA ligase type 1 subfamily. In terms of assembly, monomer.

The protein resides in the cytoplasm. The enzyme catalyses tRNA(Glu) + L-glutamate + ATP = L-glutamyl-tRNA(Glu) + AMP + diphosphate. In terms of biological role, catalyzes the attachment of glutamate to tRNA(Glu) in a two-step reaction: glutamate is first activated by ATP to form Glu-AMP and then transferred to the acceptor end of tRNA(Glu). This is Glutamate--tRNA ligase from Buchnera aphidicola subsp. Cinara cedri (strain Cc).